Here is a 198-residue protein sequence, read N- to C-terminus: Glycerol-3-phosphate acyltransferase (198 aa).

The next 5 helical transmembrane spans lie at Leu5–Gly25, Ser56–Phe76, Phe84–Phe104, Ala114–Val134, and Leu158–Trp178.

The protein belongs to the PlsY family. As to quaternary structure, probably interacts with PlsX.

The protein localises to the cell membrane. It carries out the reaction an acyl phosphate + sn-glycerol 3-phosphate = a 1-acyl-sn-glycero-3-phosphate + phosphate. It functions in the pathway lipid metabolism; phospholipid metabolism. Its function is as follows. Catalyzes the transfer of an acyl group from acyl-phosphate (acyl-PO(4)) to glycerol-3-phosphate (G3P) to form lysophosphatidic acid (LPA). This enzyme utilizes acyl-phosphate as fatty acyl donor, but not acyl-CoA or acyl-ACP. This Listeria monocytogenes serotype 4b (strain CLIP80459) protein is Glycerol-3-phosphate acyltransferase.